Consider the following 513-residue polypeptide: Putative thymidine phosphorylase (513 aa).

Belongs to the thymidine/pyrimidine-nucleoside phosphorylase family. Type 2 subfamily.

It catalyses the reaction thymidine + phosphate = 2-deoxy-alpha-D-ribose 1-phosphate + thymine. In Rhodopseudomonas palustris (strain BisB18), this protein is Putative thymidine phosphorylase.